A 458-amino-acid polypeptide reads, in one-letter code: GTPase Obg (458 aa).

The 157-residue stretch at M1 to L157 folds into the Obg domain. The OBG-type G domain occupies A158–S326. GTP is bound by residues G164–S171, F189–N193, D210–G213, N280–D283, and S307–A309. 2 residues coordinate Mg(2+): S171 and T191. The region spanning A341–G419 is the OCT domain. The disordered stretch occupies residues T420 to K458. Residues D423–E446 are compositionally biased toward basic and acidic residues. The segment covering K447–K458 has biased composition (basic residues).

The protein belongs to the TRAFAC class OBG-HflX-like GTPase superfamily. OBG GTPase family. Monomer. Mg(2+) serves as cofactor.

It is found in the cytoplasm. An essential GTPase which binds GTP, GDP and possibly (p)ppGpp with moderate affinity, with high nucleotide exchange rates and a fairly low GTP hydrolysis rate. Plays a role in control of the cell cycle, stress response, ribosome biogenesis and in those bacteria that undergo differentiation, in morphogenesis control. In Elusimicrobium minutum (strain Pei191), this protein is GTPase Obg.